Reading from the N-terminus, the 205-residue chain is Glycerol-3-phosphate acyltransferase (205 aa).

The next 5 helical transmembrane spans lie at 4–24 (IAPG…AILV), 80–100 (PFWL…PVFF), 107–127 (GVAT…GVMA), 130–150 (WLLT…SALI), and 155–175 (VWWF…LILL).

Belongs to the PlsY family. As to quaternary structure, probably interacts with PlsX.

Its subcellular location is the cell inner membrane. It carries out the reaction an acyl phosphate + sn-glycerol 3-phosphate = a 1-acyl-sn-glycero-3-phosphate + phosphate. It participates in lipid metabolism; phospholipid metabolism. Its function is as follows. Catalyzes the transfer of an acyl group from acyl-phosphate (acyl-PO(4)) to glycerol-3-phosphate (G3P) to form lysophosphatidic acid (LPA). This enzyme utilizes acyl-phosphate as fatty acyl donor, but not acyl-CoA or acyl-ACP. The sequence is that of Glycerol-3-phosphate acyltransferase from Klebsiella pneumoniae (strain 342).